Here is a 685-residue protein sequence, read N- to C-terminus: Keratin, type II cytoskeletal 2 epidermal (685 aa).

Residues 1 to 20 (MSCQISCKSRRGGGGGGGGG) form a disordered region. The interval 1-196 (MSCQISCKSR…DPEIQNVKSQ (196 aa)) is head. Arg22 is modified (asymmetric dimethylarginine). A phosphoserine mark is found at Ser25 and Ser28. Arg52 carries the omega-N-methylarginine modification. The residue at position 64 (Ser64) is a Phosphoserine. Residues 197–232 (EREQIKTLNNKFASFIDTVRFLEQQNQVLHTKWELL) are coil 1A. An IF rod domain is found at 197-511 (EREQIKTLNN…KLLEGEECRM (315 aa)). The interval 233–251 (QQLDVGTRTTNLDPVFQAY) is linker 1. Residues 252–343 (IGILKKQVDR…TLYDTELSQL (92 aa)) form a coil 1B region. The interval 344–367 (QQNVTDTNVILSMDNNRNLDLDSI) is linker 12. The coil 2 stretch occupies residues 368–507 (IAEVQSQYEI…ATYRKLLEGE (140 aa)). A tail region spans residues 508 to 685 (ECRMSGDFSD…CGSGVTFSFR (178 aa)). The interval 532 to 685 (VASKAGFGSG…CGSGVTFSFR (154 aa)) is disordered. Positions 538 to 678 (FGSGGQSSGG…GSGSGEGCGS (141 aa)) are enriched in gly residues. Arg554, Arg588, Arg603, and Arg653 each carry omega-N-methylarginine.

It belongs to the intermediate filament family. Heterotetramer of two type I and two type II keratins. Associates with KRT10.

It is found in the cytoplasm. Its function is as follows. Probably contributes to terminal cornification. Associated with keratinocyte activation, proliferation and keratinization. Required for maintenance of corneocytes and keratin filaments in suprabasal keratinocytes in the epidermis of the ear, potentially via moderation of expression and localization of keratins and their partner proteins. Plays a role in the establishment of the epidermal barrier on plantar skin. The chain is Keratin, type II cytoskeletal 2 epidermal from Rattus norvegicus (Rat).